The chain runs to 485 residues: ATP-dependent rRNA helicase RRP3 (485 aa).

The span at 1–10 (MPVLKKRKLA) shows a compositional bias: basic residues. The interval 1-55 (MPVLKKRKLAHTAQPDPIVSDLESSSSEASQQSHDEQLTAANEQDDESPQVQREE) is disordered. Positions 20 to 32 (SDLESSSSEASQQ) are enriched in low complexity. A Q motif motif is present at residues 59–87 (KSFKDLGIIDSLCEACEALGYKSPTPIQA). The Helicase ATP-binding domain occupies 90–261 (IPLALQGRDL…RASLSNPLRV (172 aa)). 103-110 (AETGSGKT) lines the ATP pocket. Positions 209-212 (DEAD) match the DEAD box motif. In terms of domain architecture, Helicase C-terminal spans 285–433 (YKDIYLVYLL…EYKVEKEEVM (149 aa)). Residues 449 to 458 (EMKDLHEKRG) are compositionally biased toward basic and acidic residues. The tract at residues 449 to 485 (EMKDLHEKRGSRGATLKGRRPAKGAKRGRDEMDREEG) is disordered. The span at 465–474 (KGRRPAKGAK) shows a compositional bias: basic residues. Residues 475–485 (RGRDEMDREEG) are compositionally biased toward basic and acidic residues.

This sequence belongs to the DEAD box helicase family. DDX47/RRP3 subfamily. In terms of assembly, interacts with the SSU processome.

It localises to the nucleus. It catalyses the reaction ATP + H2O = ADP + phosphate + H(+). In terms of biological role, ATP-dependent rRNA helicase required for pre-ribosomal RNA processing. Involved in the maturation of the 35S-pre-rRNA and to its cleavage to mature 18S rRNA. The polypeptide is ATP-dependent rRNA helicase RRP3 (Ajellomyces capsulatus (strain NAm1 / WU24) (Darling's disease fungus)).